The sequence spans 303 residues: Bifunctional protein FolD 2 (303 aa).

NADP(+)-binding positions include 169–171 (GRS), S194, and I235.

It belongs to the tetrahydrofolate dehydrogenase/cyclohydrolase family. Homodimer.

It catalyses the reaction (6R)-5,10-methylene-5,6,7,8-tetrahydrofolate + NADP(+) = (6R)-5,10-methenyltetrahydrofolate + NADPH. The catalysed reaction is (6R)-5,10-methenyltetrahydrofolate + H2O = (6R)-10-formyltetrahydrofolate + H(+). The protein operates within one-carbon metabolism; tetrahydrofolate interconversion. Catalyzes the oxidation of 5,10-methylenetetrahydrofolate to 5,10-methenyltetrahydrofolate and then the hydrolysis of 5,10-methenyltetrahydrofolate to 10-formyltetrahydrofolate. In Pseudomonas putida (strain GB-1), this protein is Bifunctional protein FolD 2.